A 240-amino-acid polypeptide reads, in one-letter code: Purine nucleoside phosphorylase DeoD-type (240 aa).

Histidine 5 lines the a purine D-ribonucleoside pocket. Residues glycine 21, arginine 25, arginine 44, and 88–91 contribute to the phosphate site; that span reads RVGS. Residues 181-183 and 205-206 each bind a purine D-ribonucleoside; these read EME and SD. The active-site Proton donor is aspartate 206.

The protein belongs to the PNP/UDP phosphorylase family. As to quaternary structure, homohexamer; trimer of homodimers.

The enzyme catalyses a purine D-ribonucleoside + phosphate = a purine nucleobase + alpha-D-ribose 1-phosphate. The catalysed reaction is a purine 2'-deoxy-D-ribonucleoside + phosphate = a purine nucleobase + 2-deoxy-alpha-D-ribose 1-phosphate. In terms of biological role, catalyzes the reversible phosphorolytic breakdown of the N-glycosidic bond in the beta-(deoxy)ribonucleoside molecules, with the formation of the corresponding free purine bases and pentose-1-phosphate. The protein is Purine nucleoside phosphorylase DeoD-type of Enterobacter sp. (strain 638).